A 1076-amino-acid chain; its full sequence is MKPDRDTLDEYFEYDAEEFLVSLALLITEGRTPECSVKGRTESFHCPPAQSCYPVTTKHECSDKLAQCRQARRTRSEVTLLWKNNLPIMVEMMLLPDCCYSDDGPTTEGIDLNDPAIKQDALLLERWILEPVPRQNGDRFIEEKTLLLAVRSFVFFSQLSAWLSVSHGAIPRNILYRISAADVDLQWNFSQTPIEHVFPVPNVSHNVALKVSVQSLPRQSNYPVLTCSIHTNIGLYEKRIQQHKLKTHQHHNPNEAEQCGTNSSQRLCSKQTWTMAPESVLHAKSGPSPEYTAAVKNIKLYPGTGSKSDHGTSQANILGFSGIGDIKSQETSVRTLKSFSMVDSSISNRQSFWQSAGETNPLIGSLIQERQEIIARIAQHLIHCDPSTSHVSGRPFNTQESSSLHSKLFRVSQENENVGKGKEAFSMTFGSPEFSSPEDTNEGKIRLKPETPRSETCISNDFYSHMPVGETNPLIGSLLQERQDVIARIAQHLEHIDPTASHIPRQSFNMHDSSSVASKVFRSSYEDKNLLKKNKDESSVSISHTKCSLLGDISDGKNLVPNKCFTSFKNNSKEKCSLKHQTRNQCQNNPSEIIQSTYQETQNKSSSLSTSSILSQHKENNLDLTSRFKEQEMSNGIDKQYSNCTTIDKQICTNKYKEKIINENYNPKFFGNLQSDDSKKNDSKIKVTVLEMSEYLNKYESMSSNKDSKRPKTCEQNTQLNSIENYLNKDNEGFKCKKSDQLKNEQDKQEDPTNEKSQNYSQRRSIKDCLSTCEQPKNTEVLRTTLKHSNVWRKHNFHSLDGTSTRAFHPQTGLPLLSSPVPQRKTQSGCFDLDSSLLHLKSFSSRSPRPCLNIEDDPDIHEKPFLSSSAPPITSLSLLGNFEESVLNYRFDPLGIVDGFTAEVGASGAFCPTHLTLPVEVSFYSVSDDNAPSPYMGVITLESLGKRGYRVPPSGTIQVTLFNPNKTVVKMFVVIYDLRDMPANHQTFLRQRTFSVPVKQEVKRSVNKENIRHTEERLLRYLIHLRFQSSKSGKIYLHRDVRLLFSRKSMEVDSGAAYELKSYTESPTNPQFSPRC.

Residues 24–32 (ALLITEGRT) form a transactivation domain 1 (TAD1) region. Disordered stretches follow at residues 700 to 721 (ESMS…TQLN) and 739 to 765 (SDQL…QRRS). Residues 739 to 754 (SDQLKNEQDKQEDPTN) show a composition bias toward basic and acidic residues. The segment at 878–935 (LLGNFEESVLNYRFDPLGIVDGFTAEVGASGAFCPTHLTLPVEVSFYSVSDDNAPSPY) is required for macropage invasion. Residues 962 to 970 (FNPNKTVVK) form a transactivation domain 2 (TAD2) region.

It belongs to the ATOS family.

The protein resides in the nucleus. In terms of biological role, transcription regulator that syncronizes transcriptional and translational programs to promote macrophage invasion of tissues. The chain is Atos homolog protein A from Homo sapiens (Human).